Reading from the N-terminus, the 341-residue chain is Glucokinase (341 aa).

ATP is bound at residue 18–23 (GDIGGT).

It belongs to the bacterial glucokinase family.

It localises to the cytoplasm. The enzyme catalyses D-glucose + ATP = D-glucose 6-phosphate + ADP + H(+). The chain is Glucokinase from Rhizobium etli (strain ATCC 51251 / DSM 11541 / JCM 21823 / NBRC 15573 / CFN 42).